A 467-amino-acid chain; its full sequence is 3-isopropylmalate dehydratase large subunit (467 aa).

[4Fe-4S] cluster is bound by residues cysteine 347, cysteine 407, and cysteine 410. Over residues 422-442 the composition is skewed to polar residues; sequence QISASSSNRNFKGRQGSSSGR. The tract at residues 422–443 is disordered; sequence QISASSSNRNFKGRQGSSSGRT.

Belongs to the aconitase/IPM isomerase family. LeuC type 1 subfamily. Heterodimer of LeuC and LeuD. [4Fe-4S] cluster serves as cofactor.

It catalyses the reaction (2R,3S)-3-isopropylmalate = (2S)-2-isopropylmalate. The protein operates within amino-acid biosynthesis; L-leucine biosynthesis; L-leucine from 3-methyl-2-oxobutanoate: step 2/4. Catalyzes the isomerization between 2-isopropylmalate and 3-isopropylmalate, via the formation of 2-isopropylmaleate. This Nostoc punctiforme (strain ATCC 29133 / PCC 73102) protein is 3-isopropylmalate dehydratase large subunit.